Reading from the N-terminus, the 351-residue chain is Histidinol-phosphate aminotransferase (351 aa).

At lysine 213 the chain carries N6-(pyridoxal phosphate)lysine.

Belongs to the class-II pyridoxal-phosphate-dependent aminotransferase family. Histidinol-phosphate aminotransferase subfamily. In terms of assembly, homodimer. Requires pyridoxal 5'-phosphate as cofactor.

The catalysed reaction is L-histidinol phosphate + 2-oxoglutarate = 3-(imidazol-4-yl)-2-oxopropyl phosphate + L-glutamate. The protein operates within amino-acid biosynthesis; L-histidine biosynthesis; L-histidine from 5-phospho-alpha-D-ribose 1-diphosphate: step 7/9. This Thermoanaerobacter sp. (strain X514) protein is Histidinol-phosphate aminotransferase.